A 263-amino-acid polypeptide reads, in one-letter code: Orotidine 5'-phosphate decarboxylase (263 aa).

Residues aspartate 36, 58-60 (KTH), 90-99 (DRKFADIGNT), tyrosine 216, and arginine 234 contribute to the substrate site. Lysine 92 serves as the catalytic Proton donor.

Belongs to the OMP decarboxylase family.

The enzyme catalyses orotidine 5'-phosphate + H(+) = UMP + CO2. It functions in the pathway pyrimidine metabolism; UMP biosynthesis via de novo pathway; UMP from orotate: step 2/2. The sequence is that of Orotidine 5'-phosphate decarboxylase (URA3) from Komagataella pastoris (Yeast).